A 301-amino-acid polypeptide reads, in one-letter code: Mating type protein mtA-1 (301 aa).

Positions 49–104 (APKKKVNGFMGFRSYYSSLFSQFPQKARSPFMTILWQHDPFHNEWDFMCSVYSSIR) form a DNA-binding region, alpha box.

The protein belongs to the MATALPHA1 family.

It localises to the nucleus. Mating type proteins are sequence specific DNA-binding proteins that act as master switches in fungal differentiation by controlling gene expression in a cell type-specific fashion. Transcriptional activator that induces the transcription of alpha-specific genes. The polypeptide is Mating type protein mtA-1 (MTA1) (Sordaria fimicola).